A 346-amino-acid chain; its full sequence is Phosphoribosylformylglycinamidine cyclo-ligase (346 aa).

It belongs to the AIR synthase family.

The protein localises to the cytoplasm. It catalyses the reaction 2-formamido-N(1)-(5-O-phospho-beta-D-ribosyl)acetamidine + ATP = 5-amino-1-(5-phospho-beta-D-ribosyl)imidazole + ADP + phosphate + H(+). Its pathway is purine metabolism; IMP biosynthesis via de novo pathway; 5-amino-1-(5-phospho-D-ribosyl)imidazole from N(2)-formyl-N(1)-(5-phospho-D-ribosyl)glycinamide: step 2/2. This is Phosphoribosylformylglycinamidine cyclo-ligase from Colwellia psychrerythraea (strain 34H / ATCC BAA-681) (Vibrio psychroerythus).